The sequence spans 1297 residues: Phosphoribosylformylglycinamidine synthase (1297 aa).

ATP contacts are provided by residues glycine 307–aspartate 318 and alanine 678. Glutamate 718, asparagine 722, and aspartate 886 together coordinate Mg(2+). A Glutamine amidotransferase type-1 domain is found at methionine 1044 to glycine 1297. Cysteine 1137 serves as the catalytic Nucleophile. Catalysis depends on residues histidine 1262 and glutamate 1264.

This sequence in the N-terminal section; belongs to the FGAMS family. In terms of assembly, monomer.

It localises to the cytoplasm. The catalysed reaction is N(2)-formyl-N(1)-(5-phospho-beta-D-ribosyl)glycinamide + L-glutamine + ATP + H2O = 2-formamido-N(1)-(5-O-phospho-beta-D-ribosyl)acetamidine + L-glutamate + ADP + phosphate + H(+). It participates in purine metabolism; IMP biosynthesis via de novo pathway; 5-amino-1-(5-phospho-D-ribosyl)imidazole from N(2)-formyl-N(1)-(5-phospho-D-ribosyl)glycinamide: step 1/2. Functionally, phosphoribosylformylglycinamidine synthase involved in the purines biosynthetic pathway. Catalyzes the ATP-dependent conversion of formylglycinamide ribonucleotide (FGAR) and glutamine to yield formylglycinamidine ribonucleotide (FGAM) and glutamate. In Vibrio cholerae serotype O1 (strain ATCC 39315 / El Tor Inaba N16961), this protein is Phosphoribosylformylglycinamidine synthase.